A 297-amino-acid polypeptide reads, in one-letter code: Homoserine kinase (297 aa).

Residue 82–92 (PVSRGLGSSAA) coordinates ATP.

The protein belongs to the GHMP kinase family. Homoserine kinase subfamily.

It is found in the cytoplasm. The enzyme catalyses L-homoserine + ATP = O-phospho-L-homoserine + ADP + H(+). The protein operates within amino-acid biosynthesis; L-threonine biosynthesis; L-threonine from L-aspartate: step 4/5. Catalyzes the ATP-dependent phosphorylation of L-homoserine to L-homoserine phosphate. This Clostridium botulinum (strain Kyoto / Type A2) protein is Homoserine kinase.